A 132-amino-acid chain; its full sequence is Ribosome-binding factor A (132 aa).

The protein belongs to the RbfA family. Monomer. Binds 30S ribosomal subunits, but not 50S ribosomal subunits or 70S ribosomes.

The protein resides in the cytoplasm. In terms of biological role, one of several proteins that assist in the late maturation steps of the functional core of the 30S ribosomal subunit. Associates with free 30S ribosomal subunits (but not with 30S subunits that are part of 70S ribosomes or polysomes). Required for efficient processing of 16S rRNA. May interact with the 5'-terminal helix region of 16S rRNA. The sequence is that of Ribosome-binding factor A from Prochlorococcus marinus (strain MIT 9515).